The following is a 259-amino-acid chain: Putative zinc metalloprotease Rip2 (259 aa).

2 helical membrane-spanning segments follow: residues 14-34 (PIFL…WIAA) and 39-59 (PLSY…SLCL). A Zn(2+)-binding site is contributed by H60. Residue E61 is part of the active site. Residue H64 participates in Zn(2+) binding. Transmembrane regions (helical) follow at residues 96–116 (LGLP…GAVY), 129–149 (IVSL…LGLT), 159–179 (VFWS…VLNL), and 203–223 (LAPA…TPAL).

It belongs to the peptidase M50B family. It depends on Zn(2+) as a cofactor.

It localises to the cell membrane. This chain is Putative zinc metalloprotease Rip2 (rip2), found in Mycolicibacterium smegmatis (strain ATCC 700084 / mc(2)155) (Mycobacterium smegmatis).